Reading from the N-terminus, the 280-residue chain is Lacto-N-neotetraose biosynthesis glycosyltransferase LgtE (280 aa).

This sequence belongs to the glycosyltransferase 25 family.

The protein operates within glycan metabolism; lacto-N-neotetraose biosynthesis. It participates in bacterial outer membrane biogenesis; lipooligosaccharide biosynthesis. Adds the first galactose to the lacto-N-tetraose chain in lipooligosaccharide (LOS). This chain is Lacto-N-neotetraose biosynthesis glycosyltransferase LgtE (lgtE), found in Neisseria meningitidis serogroup B (strain ATCC BAA-335 / MC58).